We begin with the raw amino-acid sequence, 90 residues long: Probable Fe(2+)-trafficking protein (90 aa).

It belongs to the Fe(2+)-trafficking protein family.

Could be a mediator in iron transactions between iron acquisition and iron-requiring processes, such as synthesis and/or repair of Fe-S clusters in biosynthetic enzymes. The polypeptide is Probable Fe(2+)-trafficking protein (Aeromonas salmonicida (strain A449)).